Consider the following 280-residue polypeptide: 2-dehydro-3-deoxyphosphooctonate aldolase 2 (280 aa).

This sequence belongs to the KdsA family.

Its subcellular location is the cytoplasm. The catalysed reaction is D-arabinose 5-phosphate + phosphoenolpyruvate + H2O = 3-deoxy-alpha-D-manno-2-octulosonate-8-phosphate + phosphate. The protein operates within carbohydrate biosynthesis; 3-deoxy-D-manno-octulosonate biosynthesis; 3-deoxy-D-manno-octulosonate from D-ribulose 5-phosphate: step 2/3. It participates in bacterial outer membrane biogenesis; lipopolysaccharide biosynthesis. This Pseudomonas putida (strain ATCC 47054 / DSM 6125 / CFBP 8728 / NCIMB 11950 / KT2440) protein is 2-dehydro-3-deoxyphosphooctonate aldolase 2 (kdsA2).